A 68-amino-acid chain; its full sequence is Large ribosomal subunit protein bL35 (68 aa).

The protein belongs to the bacterial ribosomal protein bL35 family.

This Pelagibacter ubique (strain HTCC1062) protein is Large ribosomal subunit protein bL35.